Consider the following 487-residue polypeptide: ATP synthase subunit beta 1 (487 aa).

162-169 lines the ATP pocket; sequence GGAGVGKT.

The protein belongs to the ATPase alpha/beta chains family. In terms of assembly, F-type ATPases have 2 components, CF(1) - the catalytic core - and CF(0) - the membrane proton channel. CF(1) has five subunits: alpha(3), beta(3), gamma(1), delta(1), epsilon(1). CF(0) has three main subunits: a(1), b(2) and c(9-12). The alpha and beta chains form an alternating ring which encloses part of the gamma chain. CF(1) is attached to CF(0) by a central stalk formed by the gamma and epsilon chains, while a peripheral stalk is formed by the delta and b chains.

It localises to the cell inner membrane. It carries out the reaction ATP + H2O + 4 H(+)(in) = ADP + phosphate + 5 H(+)(out). Functionally, produces ATP from ADP in the presence of a proton gradient across the membrane. The catalytic sites are hosted primarily by the beta subunits. The chain is ATP synthase subunit beta 1 from Gluconobacter oxydans (strain 621H) (Gluconobacter suboxydans).